Here is a 161-residue protein sequence, read N- to C-terminus: Ribonuclease H (161 aa).

Residues 2–141 (TNNEIIAATD…ADSLARQAAN (140 aa)) enclose the RNase H type-1 domain. Residues aspartate 11, glutamate 46, aspartate 69, and aspartate 133 each contribute to the Mg(2+) site.

It belongs to the RNase H family. Monomer. Mg(2+) is required as a cofactor.

Its subcellular location is the cytoplasm. It catalyses the reaction Endonucleolytic cleavage to 5'-phosphomonoester.. In terms of biological role, endonuclease that specifically degrades the RNA of RNA-DNA hybrids. The sequence is that of Ribonuclease H from Tropheryma whipplei (strain TW08/27) (Whipple's bacillus).